A 403-amino-acid chain; its full sequence is Histidine--tRNA ligase (403 aa).

It belongs to the class-II aminoacyl-tRNA synthetase family. As to quaternary structure, homodimer.

It is found in the cytoplasm. The catalysed reaction is tRNA(His) + L-histidine + ATP = L-histidyl-tRNA(His) + AMP + diphosphate + H(+). In Sulfurimonas denitrificans (strain ATCC 33889 / DSM 1251) (Thiomicrospira denitrificans (strain ATCC 33889 / DSM 1251)), this protein is Histidine--tRNA ligase.